A 451-amino-acid polypeptide reads, in one-letter code: Phosphoglucosamine mutase (451 aa).

Catalysis depends on Ser-102, which acts as the Phosphoserine intermediate. Residues Ser-102, Asp-243, Asp-245, and Asp-247 each coordinate Mg(2+). At Ser-102 the chain carries Phosphoserine.

Belongs to the phosphohexose mutase family. Mg(2+) serves as cofactor. In terms of processing, activated by phosphorylation.

It catalyses the reaction alpha-D-glucosamine 1-phosphate = D-glucosamine 6-phosphate. Catalyzes the conversion of glucosamine-6-phosphate to glucosamine-1-phosphate. This Paramagnetospirillum magneticum (strain ATCC 700264 / AMB-1) (Magnetospirillum magneticum) protein is Phosphoglucosamine mutase.